Reading from the N-terminus, the 1316-residue chain is Serine/threonine-protein kinase 36 (1316 aa).

In terms of domain architecture, Protein kinase spans Y4–I254. Residues I10 to V18 and K33 contribute to the ATP site. Residue D125 is the Proton acceptor of the active site. The disordered stretch occupies residues Q389 to D418. Over residues V407–D418 the composition is skewed to acidic residues.

Belongs to the protein kinase superfamily. Ser/Thr protein kinase family. In terms of assembly, interacts with SPAG16 and KIF27. The cofactor is Mg(2+). Weakly expressed in the heart and thymus, present at moderate to high levels in the lungs, pancreas, and kidneys and at higher levels in the brain and cerebellum. Very highly expressed in the testis.

The protein localises to the cytoplasm. The protein resides in the nucleus. It localises to the cytoskeleton. Its subcellular location is the cilium axoneme. The catalysed reaction is L-seryl-[protein] + ATP = O-phospho-L-seryl-[protein] + ADP + H(+). The enzyme catalyses L-threonyl-[protein] + ATP = O-phospho-L-threonyl-[protein] + ADP + H(+). In terms of biological role, serine/threonine protein kinase which plays an important role in the sonic hedgehog (Shh) pathway by regulating the activity of GLI transcription factors. Controls the activity of the transcriptional regulators GLI1, GLI2 and GLI3 by opposing the effect of SUFU and promoting their nuclear localization. GLI2 requires an additional function of STK36 to become transcriptionally active, but the enzyme does not need to possess an active kinase catalytic site for this to occur. Required for postnatal development, possibly by regulating the homeostasis of cerebral spinal fluid or ciliary function. Essential for construction of the central pair apparatus of motile cilia. This is Serine/threonine-protein kinase 36 from Mus musculus (Mouse).